The following is a 512-amino-acid chain: V-type proton ATPase subunit B (512 aa).

Arginine 381 lines the ATP pocket. Residues 484–512 (LYGRDREQDDDEDEDEEDPDKSGDKLIDA) are disordered. Acidic residues predominate over residues 491–502 (QDDDEDEDEEDP). The span at 503–512 (DKSGDKLIDA) shows a compositional bias: basic and acidic residues.

The protein belongs to the ATPase alpha/beta chains family. V-ATPase is a heteromultimeric enzyme composed of a peripheral catalytic V1 complex (components A to H) attached to an integral membrane V0 proton pore complex (components: a, c, c', c'', d, e, f and VOA1).

The protein localises to the vacuole membrane. Functionally, non-catalytic subunit of the V1 complex of vacuolar(H+)-ATPase (V-ATPase), a multisubunit enzyme composed of a peripheral complex (V1) that hydrolyzes ATP and a membrane integral complex (V0) that translocates protons. Plays an important role in resistance to several stresses, as well as in autophagy and virulence. The chain is V-type proton ATPase subunit B from Candida albicans (strain SC5314 / ATCC MYA-2876) (Yeast).